Reading from the N-terminus, the 190-residue chain is Ribosome hibernation promotion factor (190 aa).

The protein belongs to the HPF/YfiA ribosome-associated protein family. Long HPF subfamily. In terms of assembly, interacts with 100S ribosomes.

The protein localises to the cytoplasm. Its function is as follows. Required for dimerization of active 70S ribosomes into 100S ribosomes in stationary phase; 100S ribosomes are translationally inactive and sometimes present during exponential growth. The sequence is that of Ribosome hibernation promotion factor from Rhizobium meliloti (strain 1021) (Ensifer meliloti).